We begin with the raw amino-acid sequence, 215 residues long: Small ribosomal subunit protein uS3 (215 aa).

A KH type-2 domain is found at leucine 38–arginine 106.

This sequence belongs to the universal ribosomal protein uS3 family. Part of the 30S ribosomal subunit. Forms a tight complex with proteins S10 and S14.

In terms of biological role, binds the lower part of the 30S subunit head. Binds mRNA in the 70S ribosome, positioning it for translation. The sequence is that of Small ribosomal subunit protein uS3 from Desulforapulum autotrophicum (strain ATCC 43914 / DSM 3382 / VKM B-1955 / HRM2) (Desulfobacterium autotrophicum).